The sequence spans 443 residues: ATP-dependent protease ATPase subunit HslU (443 aa).

ATP is bound by residues isoleucine 18, 60-65, aspartate 256, glutamate 321, and arginine 393; that span reads GVGKTE.

It belongs to the ClpX chaperone family. HslU subfamily. As to quaternary structure, a double ring-shaped homohexamer of HslV is capped on each side by a ring-shaped HslU homohexamer. The assembly of the HslU/HslV complex is dependent on binding of ATP.

It localises to the cytoplasm. Its function is as follows. ATPase subunit of a proteasome-like degradation complex; this subunit has chaperone activity. The binding of ATP and its subsequent hydrolysis by HslU are essential for unfolding of protein substrates subsequently hydrolyzed by HslV. HslU recognizes the N-terminal part of its protein substrates and unfolds these before they are guided to HslV for hydrolysis. This chain is ATP-dependent protease ATPase subunit HslU, found in Pectobacterium atrosepticum (strain SCRI 1043 / ATCC BAA-672) (Erwinia carotovora subsp. atroseptica).